We begin with the raw amino-acid sequence, 324 residues long: Membrane protein UL8 (324 aa).

Residues 36-138 (ILESIIYVSG…LWYNLTVKPK (103 aa)) are immunoglobulin V-like domain. A helical transmembrane segment spans residues 278 to 298 (THYSWMLIIAIILIIFIIICL).

Belongs to the RL11 family. Highly glycosylated.

The protein resides in the host cell membrane. Its function is as follows. Plays a role in the inhibition of pro-inflammatory cytokine production. This effect is mediated by the conserved Ig-like domain. This chain is Membrane protein UL8 (UL8), found in Homo sapiens (Human).